Reading from the N-terminus, the 157-residue chain is Transcription antitermination protein NusB (157 aa).

It belongs to the NusB family.

Functionally, involved in transcription antitermination. Required for transcription of ribosomal RNA (rRNA) genes. Binds specifically to the boxA antiterminator sequence of the ribosomal RNA (rrn) operons. The polypeptide is Transcription antitermination protein NusB (Xylella fastidiosa (strain 9a5c)).